The sequence spans 346 residues: L-threonine 3-dehydrogenase (346 aa).

Cys-42 contacts Zn(2+). Residues Thr-44 and His-47 each act as charge relay system in the active site. Positions 67, 68, 97, 100, 103, and 111 each coordinate Zn(2+). Residues Ile-179, Asp-199, Arg-204, 266–268 (LSL), and 291–292 (IT) each bind NAD(+).

It belongs to the zinc-containing alcohol dehydrogenase family. As to quaternary structure, homotetramer. Zn(2+) is required as a cofactor.

The protein resides in the cytoplasm. It carries out the reaction L-threonine + NAD(+) = (2S)-2-amino-3-oxobutanoate + NADH + H(+). Its pathway is amino-acid degradation; L-threonine degradation via oxydo-reductase pathway; glycine from L-threonine: step 1/2. In terms of biological role, catalyzes the NAD(+)-dependent oxidation of L-threonine to 2-amino-3-ketobutyrate. The chain is L-threonine 3-dehydrogenase from Bacillus licheniformis (strain ATCC 14580 / DSM 13 / JCM 2505 / CCUG 7422 / NBRC 12200 / NCIMB 9375 / NCTC 10341 / NRRL NRS-1264 / Gibson 46).